The sequence spans 221 residues: Iron-sulfur cluster assembly SufBD family protein ycf24 (221 aa).

This sequence belongs to the iron-sulfur cluster assembly SufBD family.

The protein localises to the plastid. It is found in the chloroplast. This chain is Iron-sulfur cluster assembly SufBD family protein ycf24 (ycf24), found in Galdieria sulphuraria (Red alga).